A 458-amino-acid polypeptide reads, in one-letter code: Serine/threonine-protein kinase tricornered (458 aa).

Residues 92–389 form the Protein kinase domain; sequence FEALKVIGRG…LEDLKSVPFF (298 aa). Residues 98 to 106 and lysine 121 contribute to the ATP site; that span reads IGRGAFGEV. An interaction with mats and Mob1 region spans residues 118–179; it reads YAMKVLRKAD…EFLPGGDMMT (62 aa). Residue aspartate 215 is the Proton acceptor of the active site. Serine 287 is modified (phosphoserine). The region spanning 390 to 458 is the AGC-kinase C-terminal domain; the sequence is RGVDWEHIRE…YKRFEVRNLE (69 aa). A Phosphothreonine modification is found at threonine 448.

It belongs to the protein kinase superfamily. AGC Ser/Thr protein kinase family. As to quaternary structure, interacts with, and is activated by, Mob1. The cofactor is Mg(2+).

Its subcellular location is the cytoplasm. It is found in the nucleus. The enzyme catalyses L-seryl-[protein] + ATP = O-phospho-L-seryl-[protein] + ADP + H(+). It catalyses the reaction L-threonyl-[protein] + ATP = O-phospho-L-threonyl-[protein] + ADP + H(+). Functionally, serine/threonine-protein kinase involved in controlling cell structure and proliferation of a variety of polarized outgrowths including epidermal hairs, bristles, arista laterals, and dendrites. Together with fry, maintains the integrity of epidermal hairs and is an essential component of the signaling pathway regulating dendritic branching of sensory neurons. Reduces neurite outgrowth by phosphorylating pav/pavarotti, thereby inhibiting its function in microtubule-microtubule sliding. This is Serine/threonine-protein kinase tricornered from Drosophila pseudoobscura pseudoobscura (Fruit fly).